We begin with the raw amino-acid sequence, 158 residues long: NAD(P)H-quinone oxidoreductase subunit N (158 aa).

The protein belongs to the complex I NdhN subunit family. As to quaternary structure, NDH-1 can be composed of about 15 different subunits; different subcomplexes with different compositions have been identified which probably have different functions.

It localises to the cellular thylakoid membrane. It catalyses the reaction a plastoquinone + NADH + (n+1) H(+)(in) = a plastoquinol + NAD(+) + n H(+)(out). The enzyme catalyses a plastoquinone + NADPH + (n+1) H(+)(in) = a plastoquinol + NADP(+) + n H(+)(out). Functionally, NDH-1 shuttles electrons from an unknown electron donor, via FMN and iron-sulfur (Fe-S) centers, to quinones in the respiratory and/or the photosynthetic chain. The immediate electron acceptor for the enzyme in this species is believed to be plastoquinone. Couples the redox reaction to proton translocation, and thus conserves the redox energy in a proton gradient. Cyanobacterial NDH-1 also plays a role in inorganic carbon-concentration. In Crocosphaera subtropica (strain ATCC 51142 / BH68) (Cyanothece sp. (strain ATCC 51142)), this protein is NAD(P)H-quinone oxidoreductase subunit N.